A 239-amino-acid polypeptide reads, in one-letter code: Zwei Ig domain protein zig-7 (239 aa).

Positions 1-21 are cleaved as a signal peptide; the sequence is MKLINCISIALLCTLVDFSSA. The N-linked (GlcNAc...) asparagine glycan is linked to N43. The region spanning 145-211 is the Ig-like C2-type domain; the sequence is PHVIGAERRG…TEDHIGKYRC (67 aa). C164 and C211 form a disulfide bridge.

In terms of tissue distribution, expressed in body wall muscles.

The protein resides in the secreted. Its function is as follows. Probably not involved in maintaining the position of ASI and ASH head neuron cell bodies and ventral nerve cord axons of PVQ, PVP, RMEV, AVK and HSN neurons. The chain is Zwei Ig domain protein zig-7 from Caenorhabditis elegans.